The primary structure comprises 87 residues: Large ribosomal subunit protein bL31B (87 aa).

Belongs to the bacterial ribosomal protein bL31 family. Type B subfamily. Part of the 50S ribosomal subunit.

This Shigella boydii serotype 4 (strain Sb227) protein is Large ribosomal subunit protein bL31B.